Reading from the N-terminus, the 1888-residue chain is Fatty acid synthase subunit alpha (1888 aa).

Residues 98-118 form a disordered region; it reads DLAPVEEPNAEEQTGAAATPA. One can recognise a Carrier domain in the interval 146 to 221; sequence VKASLLLHVL…ETFQDTFAGS (76 aa). Serine 181 is subject to O-(pantetheine 4'-phosphoryl)serine. The segment at 675–874 is beta-ketoacyl reductase; sequence DKYVLITGAG…CGAIIGWTRG (200 aa). The region spanning 1119–1657 is the Ketosynthase family 3 (KS3) domain; that stretch reads KQMIQEVVIE…QKGAQAVAVH (539 aa). Catalysis depends on for beta-ketoacyl synthase activity residues cysteine 1305, histidine 1542, and histidine 1583. Mg(2+) contacts are provided by aspartate 1774, valine 1775, and glutamate 1776. Acetyl-CoA-binding positions include 1774-1776, tyrosine 1800, serine 1810, 1819-1829, 1843-1846, and 1873-1875; these read DVE, EAVFKSLGVKS, REAG, and ISH. Mg(2+) is bound by residues serine 1874 and histidine 1875.

Belongs to the thiolase-like superfamily. Fungal fatty acid synthetase subunit alpha family. In terms of assembly, fatty acid synthase is composed of alpha and beta subunits.

The enzyme catalyses acetyl-CoA + n malonyl-CoA + 2n NADPH + 4n H(+) = a long-chain-acyl-CoA + n CoA + n CO2 + 2n NADP(+).. It catalyses the reaction a fatty acyl-[ACP] + malonyl-[ACP] + H(+) = a 3-oxoacyl-[ACP] + holo-[ACP] + CO2. It carries out the reaction a (3R)-hydroxyacyl-[ACP] + NADP(+) = a 3-oxoacyl-[ACP] + NADPH + H(+). Functionally, fatty acid synthetase catalyzes the formation of long-chain fatty acids from acetyl-CoA, malonyl-CoA and NADPH. The alpha subunit contains domains for: acyl carrier protein, 3-oxoacyl-[acyl-carrier-protein] reductase, and 3-oxoacyl-[acyl-carrier-protein] synthase. In this species, higher amounts of C18 than C16 fatty acids are produced. The protein is Fatty acid synthase subunit alpha (FAS2) of Lachancea kluyveri (Yeast).